A 156-amino-acid polypeptide reads, in one-letter code: Rhombotin-1 (156 aa).

LIM zinc-binding domains are found at residues 22–84 (KGCA…LFGT) and 86–148 (GNCA…GQLN).

The protein localises to the nucleus. Its function is as follows. May be involved in gene regulation within neural lineage cells potentially by direct DNA binding or by binding to other transcription factors. This Xenopus laevis (African clawed frog) protein is Rhombotin-1.